A 483-amino-acid chain; its full sequence is Glutamate--tRNA ligase 1 (483 aa).

Residues 9–19 (PSPTGFLHIGG) carry the 'HIGH' region motif. The short motif at 238–242 (KLSKR) is the 'KMSKS' region element. K241 is a binding site for ATP.

Belongs to the class-I aminoacyl-tRNA synthetase family. Glutamate--tRNA ligase type 1 subfamily. As to quaternary structure, monomer.

The protein localises to the cytoplasm. It catalyses the reaction tRNA(Glu) + L-glutamate + ATP = L-glutamyl-tRNA(Glu) + AMP + diphosphate. Functionally, catalyzes the attachment of glutamate to tRNA(Glu) in a two-step reaction: glutamate is first activated by ATP to form Glu-AMP and then transferred to the acceptor end of tRNA(Glu). The chain is Glutamate--tRNA ligase 1 from Bartonella henselae (strain ATCC 49882 / DSM 28221 / CCUG 30454 / Houston 1) (Rochalimaea henselae).